We begin with the raw amino-acid sequence, 900 residues long: Bifunctional uridylyltransferase/uridylyl-removing enzyme (900 aa).

The uridylyltransferase stretch occupies residues 1-342 (MPQVDPELFD…PCEQPVQIQP (342 aa)). A uridylyl-removing region spans residues 343 to 705 (LNSRFQLRDG…TTQREFESGS (363 aa)). Positions 461–583 (VDAHTLNLIK…VGDQTHLDYL (123 aa)) constitute an HD domain. ACT domains follow at residues 706-789 (QIFI…IIQR) and 816-891 (VLEV…DNGR).

The protein belongs to the GlnD family. The cofactor is Mg(2+).

It catalyses the reaction [protein-PII]-L-tyrosine + UTP = [protein-PII]-uridylyl-L-tyrosine + diphosphate. It carries out the reaction [protein-PII]-uridylyl-L-tyrosine + H2O = [protein-PII]-L-tyrosine + UMP + H(+). Uridylyltransferase (UTase) activity is inhibited by glutamine, while glutamine activates uridylyl-removing (UR) activity. Modifies, by uridylylation and deuridylylation, the PII regulatory proteins (GlnB and homologs), in response to the nitrogen status of the cell that GlnD senses through the glutamine level. Under low glutamine levels, catalyzes the conversion of the PII proteins and UTP to PII-UMP and PPi, while under higher glutamine levels, GlnD hydrolyzes PII-UMP to PII and UMP (deuridylylation). Thus, controls uridylylation state and activity of the PII proteins, and plays an important role in the regulation of nitrogen assimilation and metabolism. This Pseudomonas aeruginosa (strain LESB58) protein is Bifunctional uridylyltransferase/uridylyl-removing enzyme.